Consider the following 105-residue polypeptide: Met repressor (105 aa).

This sequence belongs to the MetJ family. In terms of assembly, homodimer.

The protein localises to the cytoplasm. Functionally, this regulatory protein, when combined with SAM (S-adenosylmethionine) represses the expression of the methionine regulon and of enzymes involved in SAM synthesis. This chain is Met repressor, found in Actinobacillus succinogenes (strain ATCC 55618 / DSM 22257 / CCUG 43843 / 130Z).